A 1483-amino-acid polypeptide reads, in one-letter code: Protein ORF C (1483 aa).

Disordered regions lie at residues 135–268 (LNDR…GRPP), 306–334 (VPYQ…LRPV), 383–506 (RRRA…FKRH), 518–653 (SIDD…DRNR), 680–911 (RQRR…TSVS), 949–976 (SSDD…RGGS), 1013–1061 (ALQQ…TDLI), and 1089–1299 (FSVA…QPSD). A compositionally biased stretch (low complexity) spans 141–153 (AAGSAQRGSAGSR). The segment covering 157–170 (DNLTPTAADTTGAQ) has biased composition (polar residues). Low complexity-rich tracts occupy residues 190–206 (ASNV…RRQQ) and 220–251 (ARQQ…TTAT). Residues 252-264 (RQVFEQQGPSTIQ) show a composition bias toward polar residues. 3 stretches are compositionally biased toward low complexity: residues 424 to 449 (SGQS…TTGT), 474 to 483 (SNEPSRQSQS), and 529 to 541 (TMTQ…STTR). The segment covering 596–607 (GSVTTTQPSGQL) has biased composition (polar residues). Residues 609–621 (SDDRGRPAPERRQ) show a composition bias toward basic and acidic residues. Positions 622–640 (QPTSRQTVAQTNIIPNTSG) are enriched in polar residues. A compositionally biased stretch (basic and acidic residues) spans 680–689 (RQRRETEAEH). Polar residues predominate over residues 699–710 (TGVTPQRSNNPF). The span at 740 to 749 (SLREYRRRDP) shows a compositional bias: basic and acidic residues. Residues 754-774 (GRSYTDGSTTSDGDSSDNSWS) are compositionally biased toward low complexity. The segment covering 841 to 876 (NLKSPSPRTKLTRSSSLKSPGTTTRDTQQTSHPLTR) has biased composition (polar residues). A compositionally biased stretch (low complexity) spans 894–909 (DSGGSSDGNTGSSQTS). Polar residues-rich tracts occupy residues 1096–1109 (GSTS…SSIP) and 1116–1125 (GPSTMTSQSV). Positions 1148–1158 (SQSQPSSEQPA) are enriched in low complexity. The span at 1188–1202 (QPQSTVTNTQTQDVL) shows a compositional bias: polar residues. Low complexity-rich tracts occupy residues 1204–1226 (SQGS…KTGS) and 1233–1251 (KSAL…SGKS). The segment covering 1258–1276 (AASSTDPTTKPTRKVSINA) has biased composition (polar residues). Low complexity predominate over residues 1284–1299 (KSSTKQSTKTSTQPSD). A coiled-coil region spans residues 1408 to 1438 (AEQIRNLEVDELKILRQQVRERIANERQQQD). Residues 1454-1483 (DMLVSEESAAPTPLPMDTGRFTPKSDVDMS) are disordered.

The protein is Protein ORF C of Elephantid herpesvirus 1 (isolate Asian elephant/Berlin/Kiba/1998) (EIHV-1).